Consider the following 265-residue polypeptide: 4-hydroxy-tetrahydrodipicolinate reductase (265 aa).

9-14 (GPRGRM) is a binding site for NAD(+). Arginine 37 contributes to the NADP(+) binding site. Residues 98-100 (GTT) and 124-127 (APNF) each bind NAD(+). The active-site Proton donor/acceptor is histidine 154. Histidine 155 serves as a coordination point for (S)-2,3,4,5-tetrahydrodipicolinate. Residue lysine 158 is the Proton donor of the active site. 164–165 (GT) is a (S)-2,3,4,5-tetrahydrodipicolinate binding site.

It belongs to the DapB family.

The protein resides in the cytoplasm. It carries out the reaction (S)-2,3,4,5-tetrahydrodipicolinate + NAD(+) + H2O = (2S,4S)-4-hydroxy-2,3,4,5-tetrahydrodipicolinate + NADH + H(+). The enzyme catalyses (S)-2,3,4,5-tetrahydrodipicolinate + NADP(+) + H2O = (2S,4S)-4-hydroxy-2,3,4,5-tetrahydrodipicolinate + NADPH + H(+). It participates in amino-acid biosynthesis; L-lysine biosynthesis via DAP pathway; (S)-tetrahydrodipicolinate from L-aspartate: step 4/4. Its function is as follows. Catalyzes the conversion of 4-hydroxy-tetrahydrodipicolinate (HTPA) to tetrahydrodipicolinate. This is 4-hydroxy-tetrahydrodipicolinate reductase from Geobacillus kaustophilus (strain HTA426).